The following is a 390-amino-acid chain: MLQFDLLKTDPSSHARRGQLTLNHGVVQTPIFMPVGTYGTVKGVMPRSLQEMGAQIILGNTFHLWMRPGLDIMQSFGGLHGFEKWDKPILTDSGGFQVWSLGAMRKITEEGVHFASPVNGDKLFMSPEVSMQIQTVLNSDIVMQLDECTPYETNGHKTTEAEARKSMEMSRRWAKRSSDEFQRLGNPNALFGIVQGGMYENLREESLQALVEMDFPGYAVGGVSVGEPKDEMLAIMAHTPHRLPAHKPRYLMGVGTPEDLVQGVADGVDMFDCVMPTRNARNGTIFTRYGDLKIRNARHKTDHQPLDPSCTCHACAGTSGVSWEQGGRDGFSRAYLHHLDRCGEMLGPMLTTIHNLHYYLNLMQEVRNALEAGNFTEMRARFKAERARGV.

D92 serves as the catalytic Proton acceptor. Substrate contacts are provided by residues D92–F96, D146, Q195, and G222. The interval G253–D259 is RNA binding. D272 functions as the Nucleophile in the catalytic mechanism. Residues T277 to R281 are RNA binding; important for wobble base 34 recognition. Residues C310, C312, C315, and H354 each coordinate Zn(2+).

This sequence belongs to the queuine tRNA-ribosyltransferase family. In terms of assembly, homodimer. Within each dimer, one monomer is responsible for RNA recognition and catalysis, while the other monomer binds to the replacement base PreQ1. Zn(2+) serves as cofactor.

It carries out the reaction 7-aminomethyl-7-carbaguanine + guanosine(34) in tRNA = 7-aminomethyl-7-carbaguanosine(34) in tRNA + guanine. Its pathway is tRNA modification; tRNA-queuosine biosynthesis. Catalyzes the base-exchange of a guanine (G) residue with the queuine precursor 7-aminomethyl-7-deazaguanine (PreQ1) at position 34 (anticodon wobble position) in tRNAs with GU(N) anticodons (tRNA-Asp, -Asn, -His and -Tyr). Catalysis occurs through a double-displacement mechanism. The nucleophile active site attacks the C1' of nucleotide 34 to detach the guanine base from the RNA, forming a covalent enzyme-RNA intermediate. The proton acceptor active site deprotonates the incoming PreQ1, allowing a nucleophilic attack on the C1' of the ribose to form the product. After dissociation, two additional enzymatic reactions on the tRNA convert PreQ1 to queuine (Q), resulting in the hypermodified nucleoside queuosine (7-(((4,5-cis-dihydroxy-2-cyclopenten-1-yl)amino)methyl)-7-deazaguanosine). This chain is Queuine tRNA-ribosyltransferase, found in Delftia acidovorans (strain DSM 14801 / SPH-1).